The primary structure comprises 65 residues: MALPKNLIPMPRSRFLRVKCIDCGNEQIVFSHPATPVRCLVCGATLVEPTGGKGIIKAKVLEVLE.

Zn(2+) is bound by residues Cys20, Cys23, Cys39, and Cys42. The C4-type zinc-finger motif lies at 20-42 (CIDCGNEQIVFSHPATPVRCLVC).

Belongs to the eukaryotic ribosomal protein eS27 family. In terms of assembly, part of the 30S ribosomal subunit. Zn(2+) is required as a cofactor.

The polypeptide is Small ribosomal subunit protein eS27 (Thermococcus kodakarensis (strain ATCC BAA-918 / JCM 12380 / KOD1) (Pyrococcus kodakaraensis (strain KOD1))).